The chain runs to 252 residues: 2-succinyl-6-hydroxy-2,4-cyclohexadiene-1-carboxylate synthase (252 aa).

This sequence belongs to the AB hydrolase superfamily. MenH family. Monomer.

It carries out the reaction 5-enolpyruvoyl-6-hydroxy-2-succinyl-cyclohex-3-ene-1-carboxylate = (1R,6R)-6-hydroxy-2-succinyl-cyclohexa-2,4-diene-1-carboxylate + pyruvate. Its pathway is quinol/quinone metabolism; 1,4-dihydroxy-2-naphthoate biosynthesis; 1,4-dihydroxy-2-naphthoate from chorismate: step 3/7. The protein operates within quinol/quinone metabolism; menaquinone biosynthesis. Catalyzes a proton abstraction reaction that results in 2,5-elimination of pyruvate from 2-succinyl-5-enolpyruvyl-6-hydroxy-3-cyclohexene-1-carboxylate (SEPHCHC) and the formation of 2-succinyl-6-hydroxy-2,4-cyclohexadiene-1-carboxylate (SHCHC). In Salmonella paratyphi A (strain ATCC 9150 / SARB42), this protein is 2-succinyl-6-hydroxy-2,4-cyclohexadiene-1-carboxylate synthase.